The chain runs to 276 residues: Rhomboid protease GlpG (276 aa).

A run of 6 helical transmembrane segments spans residues 94 to 114, 142 to 162, 169 to 189, 192 to 212, 229 to 249, and 250 to 270; these read GPVTWVMMIACVVVFIAMQIL, ALMHFSLMHILFNLLWWWYLG, LGSGKLIVITLISALLSGYVQ, FSGPWFGGLSGVVYALMGYVW, LIIFALIWIVAGWFDLFGMSM, and ANGAHIAGLAVGLAMAFVDSL. The Nucleophile role is filled by S201. Residue H254 is part of the active site.

This sequence belongs to the peptidase S54 family.

It is found in the cell inner membrane. It carries out the reaction Cleaves type-1 transmembrane domains using a catalytic dyad composed of serine and histidine that are contributed by different transmembrane domains.. In terms of biological role, rhomboid-type serine protease that catalyzes intramembrane proteolysis. The chain is Rhomboid protease GlpG from Escherichia coli O45:K1 (strain S88 / ExPEC).